Here is a 73-residue protein sequence, read N- to C-terminus: Structural DNA-binding protein p10 (73 aa).

Positions 1–35 (MPTKAGTKSTAHKKTTTKGPSKSPKGKTHATALHQ) are disordered.

Belongs to the asfivirus P10 family.

The protein localises to the virion. In terms of biological role, may play a role in genome packaging through direct interaction with viral DNA. Binds to ssDNA and dsDNA with the same apparent affinity in vitro. The sequence is that of Structural DNA-binding protein p10 from African swine fever virus (isolate Tick/Malawi/Lil 20-1/1983) (ASFV).